The following is a 267-amino-acid chain: 27 kDa primary mesenchyme-specific spicule protein (267 aa).

The signal sequence occupies residues 1 to 16 (MKLLAILLVLPALCFG). The segment at 20–64 (EGPGMGPGMGPGMGPGMGPGMGPGMGPGMGPGMGPGQGQGQGQGQ) is 11 X 4 AA tandem repeats of G-[PQ]-G-[MQ]. 11 tandem repeats follow at residues 21-24 (GPGM), 25-28 (GPGM), 29-32 (GPGM), 33-36 (GPGM), 37-40 (GPGM), 41-44 (GPGM), 45-48 (GPGM), 49-52 (GPGM), 53-56 (GPGQ), 57-60 (GQGQ), and 61-64 (GQGQ). The disordered stretch occupies residues 44–68 (MGPGMGPGMGPGQGQGQGQGQGQVG). Residues 79–220 (IGQQCFKMMS…CDEPMYFACS (142 aa)) enclose the C-type lectin domain. Intrachain disulfides connect Cys100–Cys219 and Cys197–Cys211.

As to expression, expressed specifically in the micromere/primary mesenchyme cells (PMC) lineage. Produced uniformly and exclusively by PMCs through the early prism stage and this specificity is further restricted during skeletogenesis to a subpopulation of PMCs associated with the growing tips of the spicules.

It localises to the secreted. In terms of biological role, may play a role in the regulation or execution of skeletal growth. The protein is 27 kDa primary mesenchyme-specific spicule protein (PM27) of Strongylocentrotus purpuratus (Purple sea urchin).